A 77-amino-acid chain; its full sequence is Neurexophilin-4 (77 aa).

A v (Cys-rich) region spans residues 1–77 (NCHVEYEKTN…NFQSEHPYFG (77 aa)).

Belongs to the neurexophilin family. Post-translationally, may be proteolytically processed at the boundary between the N-terminal non-conserved and the central conserved domain in neuron-like cells.

It is found in the secreted. In terms of biological role, may be signaling molecules that resemble neuropeptides and that act by binding to alpha-neurexins and possibly other receptors. This Macaca mulatta (Rhesus macaque) protein is Neurexophilin-4 (NXPH4).